The sequence spans 252 residues: Triosephosphate isomerase (252 aa).

10–12 contacts substrate; sequence NWK. H96 functions as the Electrophile in the catalytic mechanism. E168 functions as the Proton acceptor in the catalytic mechanism. Substrate contacts are provided by residues G174, S213, and 234–235; that span reads GG.

It belongs to the triosephosphate isomerase family. As to quaternary structure, homodimer.

It is found in the cytoplasm. The enzyme catalyses D-glyceraldehyde 3-phosphate = dihydroxyacetone phosphate. The protein operates within carbohydrate biosynthesis; gluconeogenesis. It functions in the pathway carbohydrate degradation; glycolysis; D-glyceraldehyde 3-phosphate from glycerone phosphate: step 1/1. In terms of biological role, involved in the gluconeogenesis. Catalyzes stereospecifically the conversion of dihydroxyacetone phosphate (DHAP) to D-glyceraldehyde-3-phosphate (G3P). This is Triosephosphate isomerase from Nitrosomonas europaea (strain ATCC 19718 / CIP 103999 / KCTC 2705 / NBRC 14298).